Consider the following 166-residue polypeptide: CDP-archaeol synthase (166 aa).

5 helical membrane-spanning segments follow: residues 1–21, 55–75, 78–98, 110–130, and 131–151; these read MPII…LVAN, LLVA…FLGI, IYVS…GAFI, AIGL…IISK, and ISLN…LHIL.

Belongs to the CDP-archaeol synthase family. Requires Mg(2+) as cofactor.

Its subcellular location is the cell membrane. The enzyme catalyses 2,3-bis-O-(geranylgeranyl)-sn-glycerol 1-phosphate + CTP + H(+) = CDP-2,3-bis-O-(geranylgeranyl)-sn-glycerol + diphosphate. Its pathway is membrane lipid metabolism; glycerophospholipid metabolism. Functionally, catalyzes the formation of CDP-2,3-bis-(O-geranylgeranyl)-sn-glycerol (CDP-archaeol) from 2,3-bis-(O-geranylgeranyl)-sn-glycerol 1-phosphate (DGGGP) and CTP. This reaction is the third ether-bond-formation step in the biosynthesis of archaeal membrane lipids. In Sulfurisphaera tokodaii (strain DSM 16993 / JCM 10545 / NBRC 100140 / 7) (Sulfolobus tokodaii), this protein is CDP-archaeol synthase.